A 65-amino-acid polypeptide reads, in one-letter code: Large ribosomal subunit protein bL35 (65 aa).

The interval 1–29 is disordered; the sequence is MPKMKTNRGAAKRFKKTGSGRIKRGKAFT. Over residues 10 to 26 the composition is skewed to basic residues; sequence AAKRFKKTGSGRIKRGK.

Belongs to the bacterial ribosomal protein bL35 family.

The protein is Large ribosomal subunit protein bL35 of Desulfotalea psychrophila (strain LSv54 / DSM 12343).